The following is a 369-amino-acid chain: Actin-related protein 2/3 complex subunit 1B-A (369 aa).

WD repeat units lie at residues 6–45 (FLLE…WSKI), 50–89 (EHNG…WKPT), 94–135 (RINR…WVCK), 140–179 (PIRS…VEER), 200–239 (SSCG…RVTS), 242–282 (TDTL…LSFG), and 321–364 (LHKN…SAMK).

It belongs to the WD repeat ARPC1 family. As to quaternary structure, component of the Arp2/3 complex composed of actr2/arp2, actr3/arp3, arpc1 (arpc1a or arpc1b), arpc2, arpc3, arpc4 and arpc5.

The protein localises to the cytoplasm. It is found in the cytoskeleton. It localises to the nucleus. Component of the Arp2/3 complex, a multiprotein complex that mediates actin polymerization upon stimulation by nucleation-promoting factor (NPF). The Arp2/3 complex mediates the formation of branched actin networks in the cytoplasm, providing the force for cell motility. In addition to its role in the cytoplasmic cytoskeleton, the Arp2/3 complex also promotes actin polymerization in the nucleus, thereby regulating gene transcription and repair of damaged DNA. The Arp2/3 complex promotes homologous recombination (HR) repair in response to DNA damage by promoting nuclear actin polymerization, leading to drive motility of double-strand breaks (DSBs). The sequence is that of Actin-related protein 2/3 complex subunit 1B-A (arpc1b-a) from Xenopus laevis (African clawed frog).